The following is a 420-amino-acid chain: Na(+)/H(+) antiporter NhaA (420 aa).

The next 10 helical transmembrane spans lie at 34-54 (TTGGMLMLAATVAALLWANLG), 69-89 (LTIEQWAADGLLTVFFFIAGL), 107-127 (LVPIVAAVCGMVFPAGIYTLF), 141-161 (IPMATDIAFALAVLAIVGAGL), 168-190 (FLLTLAIADDLGSIIVIAVFFST), 194-213 (IWWLAGAIACIGLWGVMQHF), 271-291 (WSAGVVVPFFALMSAGVHVSG), 301-321 (PISLGIVCGLILGKVIGITLG), 342-362 (IIAVAVLAGIGFTVSMLMTDL), and 374-394 (AKASVLMASFLAAILGGAMLH).

This sequence belongs to the NhaA Na(+)/H(+) (TC 2.A.33) antiporter family.

It localises to the cell membrane. It carries out the reaction Na(+)(in) + 2 H(+)(out) = Na(+)(out) + 2 H(+)(in). Functionally, na(+)/H(+) antiporter that extrudes sodium in exchange for external protons. This is Na(+)/H(+) antiporter NhaA from Cutibacterium acnes (strain DSM 16379 / KPA171202) (Propionibacterium acnes).